Here is a 473-residue protein sequence, read N- to C-terminus: Glutamyl-tRNA reductase (473 aa).

Residues 49 to 52 (TCNR), Ser109, 114 to 116 (EQQ), and Gln120 contribute to the substrate site. Cys50 acts as the Nucleophile in catalysis. 189-194 (GAGSMG) is an NADP(+) binding site. Positions 445–473 (SGLDAGSGPQGADGPSAGPTPSAPNPSAE) are disordered.

This sequence belongs to the glutamyl-tRNA reductase family. In terms of assembly, homodimer.

It carries out the reaction (S)-4-amino-5-oxopentanoate + tRNA(Glu) + NADP(+) = L-glutamyl-tRNA(Glu) + NADPH + H(+). The protein operates within porphyrin-containing compound metabolism; protoporphyrin-IX biosynthesis; 5-aminolevulinate from L-glutamyl-tRNA(Glu): step 1/2. In terms of biological role, catalyzes the NADPH-dependent reduction of glutamyl-tRNA(Glu) to glutamate 1-semialdehyde (GSA). This is Glutamyl-tRNA reductase from Mycobacterium ulcerans (strain Agy99).